Reading from the N-terminus, the 187-residue chain is Adenylate kinase (187 aa).

An ATP-binding site is contributed by 11–16; it reads GAGKGT. The tract at residues 31–60 is NMP; it reads STGDILREAVKNQTPMGIEAKRYMDAGDLV. Residues Thr32, Arg37, 58–60, 86–89, and Gln93 contribute to the AMP site; these read DLV and GFPR. The segment at 127-137 is LID; it reads GRAEIEGRADD. Arg128 contributes to the ATP binding site. Residues Arg134 and Arg145 each coordinate AMP. Gly173 contributes to the ATP binding site.

The protein belongs to the adenylate kinase family. Monomer.

It localises to the cytoplasm. It carries out the reaction AMP + ATP = 2 ADP. The protein operates within purine metabolism; AMP biosynthesis via salvage pathway; AMP from ADP: step 1/1. Its function is as follows. Catalyzes the reversible transfer of the terminal phosphate group between ATP and AMP. Plays an important role in cellular energy homeostasis and in adenine nucleotide metabolism. This chain is Adenylate kinase, found in Leptospira borgpetersenii serovar Hardjo-bovis (strain JB197).